The sequence spans 838 residues: Serine/threonine-protein phosphatase 4 regulatory subunit 3 (838 aa).

Disordered stretches follow at residues 452 to 482 (NNCNGNSAVKAGESNGAESPIAPPGSRSPSR) and 745 to 838 (AINK…SESS). Residues 747–761 (NKQQDNNGERNTTTG) show a composition bias toward polar residues. Positions 783 to 792 (SDGENNENNE) are enriched in acidic residues.

In terms of assembly, regulatory subunit 3 (R3) of the histone H2A phosphatase complex (HTP-C) consisting of PPH3, PSY2 and PSY4.

The protein resides in the nucleus. In terms of biological role, core regulatory subunit of the histone H2A phosphatase complex, which dephosphorylates H2AS128ph (gamma-H2A) that has been displaced from sites of DNA lesions in the double-stranded DNA break repair process. Dephosphorylation is necessary for efficient recovery from the DNA damage checkpoint. The protein is Serine/threonine-protein phosphatase 4 regulatory subunit 3 (PSY2) of Eremothecium gossypii (strain ATCC 10895 / CBS 109.51 / FGSC 9923 / NRRL Y-1056) (Yeast).